A 256-amino-acid chain; its full sequence is Putative F-box protein At3g51171 (256 aa).

An F-box domain is found at 1-44; that stretch reads MVPLPWELEEDILSRLAAQSLVRFRSVCKRWNYLFDEKSFIKNH.

This is Putative F-box protein At3g51171 from Arabidopsis thaliana (Mouse-ear cress).